Reading from the N-terminus, the 134-residue chain is ATP synthase epsilon chain (134 aa).

The protein belongs to the ATPase epsilon chain family. As to quaternary structure, F-type ATPases have 2 components, CF(1) - the catalytic core - and CF(0) - the membrane proton channel. CF(1) has five subunits: alpha(3), beta(3), gamma(1), delta(1), epsilon(1). CF(0) has three main subunits: a, b and c.

The protein resides in the cell membrane. In terms of biological role, produces ATP from ADP in the presence of a proton gradient across the membrane. This is ATP synthase epsilon chain (atpC) from Priestia megaterium (strain ATCC 12872 / QMB1551) (Bacillus megaterium).